The following is a 135-amino-acid chain: uncharacterized protein (135 aa).

Residues 1-80 (MRSSSLPGAR…QRGSCASANA (80 aa)) are disordered. Over residues 54 to 65 (GARGGGRRGWGG) the composition is skewed to gly residues.

This is an uncharacterized protein from Homo sapiens (Human).